The following is a 299-amino-acid chain: Small ribosomal subunit protein uS3 (299 aa).

The KH type-2 domain maps to 39–107 (VREYLKAKLK…PVAVNIEEVR (69 aa)). The interval 214-299 (PVIKTDERED…AVAPGDAKGE (86 aa)) is disordered. Positions 217-248 (KTDEREDDRRNRRGPRSDRPAGDRRPPSRDGA) are enriched in basic and acidic residues. Positions 257-282 (ADAGAAAPTDKPADGAAPAAADGPKA) are enriched in low complexity.

It belongs to the universal ribosomal protein uS3 family. Part of the 30S ribosomal subunit. Forms a tight complex with proteins S10 and S14.

Binds the lower part of the 30S subunit head. Binds mRNA in the 70S ribosome, positioning it for translation. The chain is Small ribosomal subunit protein uS3 from Methylibium petroleiphilum (strain ATCC BAA-1232 / LMG 22953 / PM1).